We begin with the raw amino-acid sequence, 418 residues long: Tyrosine--tRNA ligase (418 aa).

Tyr-34 serves as a coordination point for L-tyrosine. The 'HIGH' region signature appears at 39-48 (PTADSLHLGH). The L-tyrosine site is built by Tyr-169 and Gln-173. The short motif at 229 to 233 (KFGKS) is the 'KMSKS' region element. Lys-232 contacts ATP. The S4 RNA-binding domain maps to 352–418 (LNIVDMLVTA…GKKKYAVLTY (67 aa)).

The protein belongs to the class-I aminoacyl-tRNA synthetase family. TyrS type 1 subfamily. As to quaternary structure, homodimer.

The protein localises to the cytoplasm. The enzyme catalyses tRNA(Tyr) + L-tyrosine + ATP = L-tyrosyl-tRNA(Tyr) + AMP + diphosphate + H(+). Functionally, catalyzes the attachment of tyrosine to tRNA(Tyr) in a two-step reaction: tyrosine is first activated by ATP to form Tyr-AMP and then transferred to the acceptor end of tRNA(Tyr). The protein is Tyrosine--tRNA ligase of Streptococcus equi subsp. zooepidemicus (strain MGCS10565).